A 246-amino-acid polypeptide reads, in one-letter code: tRNA (guanine-N(1)-)-methyltransferase (246 aa).

S-adenosyl-L-methionine contacts are provided by residues Gly117 and 137 to 142 (IGDYVL).

This sequence belongs to the RNA methyltransferase TrmD family. Homodimer.

The protein localises to the cytoplasm. It catalyses the reaction guanosine(37) in tRNA + S-adenosyl-L-methionine = N(1)-methylguanosine(37) in tRNA + S-adenosyl-L-homocysteine + H(+). Specifically methylates guanosine-37 in various tRNAs. The protein is tRNA (guanine-N(1)-)-methyltransferase of Acinetobacter baumannii (strain ACICU).